Reading from the N-terminus, the 94-residue chain is Co-chaperonin GroES (94 aa).

The protein belongs to the GroES chaperonin family. In terms of assembly, heptamer of 7 subunits arranged in a ring. Interacts with the chaperonin GroEL.

It is found in the cytoplasm. In terms of biological role, together with the chaperonin GroEL, plays an essential role in assisting protein folding. The GroEL-GroES system forms a nano-cage that allows encapsulation of the non-native substrate proteins and provides a physical environment optimized to promote and accelerate protein folding. GroES binds to the apical surface of the GroEL ring, thereby capping the opening of the GroEL channel. This is Co-chaperonin GroES from Bacillus cereus (strain ATCC 14579 / DSM 31 / CCUG 7414 / JCM 2152 / NBRC 15305 / NCIMB 9373 / NCTC 2599 / NRRL B-3711).